The primary structure comprises 185 residues: Protein GrpE (185 aa).

Basic and acidic residues predominate over residues 1–12 (MADEQLNEKDLN). Positions 1 to 22 (MADEQLNEKDLNVEETGAGNAA) are disordered.

Belongs to the GrpE family. Homodimer.

The protein resides in the cytoplasm. In terms of biological role, participates actively in the response to hyperosmotic and heat shock by preventing the aggregation of stress-denatured proteins, in association with DnaK and GrpE. It is the nucleotide exchange factor for DnaK and may function as a thermosensor. Unfolded proteins bind initially to DnaJ; upon interaction with the DnaJ-bound protein, DnaK hydrolyzes its bound ATP, resulting in the formation of a stable complex. GrpE releases ADP from DnaK; ATP binding to DnaK triggers the release of the substrate protein, thus completing the reaction cycle. Several rounds of ATP-dependent interactions between DnaJ, DnaK and GrpE are required for fully efficient folding. This Pseudomonas putida (strain ATCC 700007 / DSM 6899 / JCM 31910 / BCRC 17059 / LMG 24140 / F1) protein is Protein GrpE.